Here is a 239-residue protein sequence, read N- to C-terminus: Ribonuclease PH (239 aa).

Residues Arg86 and Gly124–Arg126 each bind phosphate.

This sequence belongs to the RNase PH family. In terms of assembly, homohexameric ring arranged as a trimer of dimers.

It carries out the reaction tRNA(n+1) + phosphate = tRNA(n) + a ribonucleoside 5'-diphosphate. Its function is as follows. Phosphorolytic 3'-5' exoribonuclease that plays an important role in tRNA 3'-end maturation. Removes nucleotide residues following the 3'-CCA terminus of tRNAs; can also add nucleotides to the ends of RNA molecules by using nucleoside diphosphates as substrates, but this may not be physiologically important. Probably plays a role in initiation of 16S rRNA degradation (leading to ribosome degradation) during starvation. The protein is Ribonuclease PH of Sodalis glossinidius (strain morsitans).